Reading from the N-terminus, the 560-residue chain is 2-isopropylmalate synthase (560 aa).

The region spanning 30–303 (PVWCSVDLRD…DPEIDCSNIE (274 aa)) is the Pyruvate carboxyltransferase domain. The Mg(2+) site is built by Asp-39, His-242, His-244, and Asn-278. Positions 437–560 (QPEGRLRFVD…RVLDVKAGKA (124 aa)) are regulatory domain.

The protein belongs to the alpha-IPM synthase/homocitrate synthase family. LeuA type 2 subfamily. Homodimer. Mg(2+) serves as cofactor.

Its subcellular location is the cytoplasm. The catalysed reaction is 3-methyl-2-oxobutanoate + acetyl-CoA + H2O = (2S)-2-isopropylmalate + CoA + H(+). It participates in amino-acid biosynthesis; L-leucine biosynthesis; L-leucine from 3-methyl-2-oxobutanoate: step 1/4. Functionally, catalyzes the condensation of the acetyl group of acetyl-CoA with 3-methyl-2-oxobutanoate (2-ketoisovalerate) to form 3-carboxy-3-hydroxy-4-methylpentanoate (2-isopropylmalate). This Rhizobium johnstonii (strain DSM 114642 / LMG 32736 / 3841) (Rhizobium leguminosarum bv. viciae) protein is 2-isopropylmalate synthase.